Here is a 197-residue protein sequence, read N- to C-terminus: Predicted GPI-anchored protein 34 (197 aa).

The first 20 residues, 1–20 (MKFTSLICSSILLIIPTVMA), serve as a signal peptide directing secretion. 3 N-linked (GlcNAc...) asparagine glycosylation sites follow: Asn110, Asn114, and Asn152. Gly169 is lipidated: GPI-anchor amidated glycine. The propeptide at 170-197 (AAAMAGPVPILTNSIFTAGLLALAAVLL) is removed in mature form.

The protein localises to the cell membrane. In terms of biological role, predicted GPI-anchored protein which may have a role during host infection. The chain is Predicted GPI-anchored protein 34 (PGA34) from Candida albicans (strain SC5314 / ATCC MYA-2876) (Yeast).